The sequence spans 393 residues: Putative mitogen-activated protein kinase kinase kinase 7-like (393 aa).

Residues 11-266 (KLSEKFLGAG…PSMKEIEKFL (256 aa)) enclose the Protein kinase domain. ATP-binding positions include 17–25 (LGAGSGGAV) and lysine 38. Aspartate 133 (proton acceptor) is an active-site residue. Positions 339-379 (AAADGDREVRRAEKDTERETSRAAHNGERETRRAGQDVGRE) are disordered.

Belongs to the protein kinase superfamily. STE Ser/Thr protein kinase family. MAP kinase kinase kinase subfamily. Mg(2+) serves as cofactor.

The enzyme catalyses L-seryl-[protein] + ATP = O-phospho-L-seryl-[protein] + ADP + H(+). The catalysed reaction is L-threonyl-[protein] + ATP = O-phospho-L-threonyl-[protein] + ADP + H(+). This Drosophila melanogaster (Fruit fly) protein is Putative mitogen-activated protein kinase kinase kinase 7-like (Takl1).